Reading from the N-terminus, the 292-residue chain is Cbb3-type cytochrome c oxidase subunit CcoP (292 aa).

Transmembrane regions (helical) follow at residues 11-31 and 62-82; these read FGLIAALVILVLTIYESSSLI and VGWIASFMCTIVWAFWYFFFG. 2 Cytochrome c domains span residues 116–195 and 205–288; these read ELVD…MAEI and QLID…QSLK. 8 residues coordinate heme c: Cys-129, Cys-132, His-133, Met-174, Cys-219, Cys-222, His-223, and Met-264.

The protein belongs to the CcoP / FixP family. As to quaternary structure, component of the cbb3-type cytochrome c oxidase at least composed of CcoN, CcoO, CcoQ and CcoP. It depends on heme c as a cofactor.

The protein localises to the cell inner membrane. Its pathway is energy metabolism; oxidative phosphorylation. Its function is as follows. C-type cytochrome. Part of the cbb3-type cytochrome c oxidase complex. CcoP subunit is required for transferring electrons from donor cytochrome c via its heme groups to CcoO subunit. From there, electrons are shuttled to the catalytic binuclear center of CcoN subunit where oxygen reduction takes place. The complex also functions as a proton pump. The polypeptide is Cbb3-type cytochrome c oxidase subunit CcoP (Helicobacter pylori (Campylobacter pylori)).